The sequence spans 167 residues: NAD(P)H-quinone oxidoreductase subunit I, chloroplastic (167 aa).

2 4Fe-4S ferredoxin-type domains span residues 55–84 (GRIH…VDWK) and 95–124 (LNYS…MTEE). Residues Cys64, Cys67, Cys70, Cys74, Cys104, Cys107, Cys110, and Cys114 each contribute to the [4Fe-4S] cluster site.

Belongs to the complex I 23 kDa subunit family. In terms of assembly, NDH is composed of at least 16 different subunits, 5 of which are encoded in the nucleus. The cofactor is [4Fe-4S] cluster.

Its subcellular location is the plastid. The protein resides in the chloroplast thylakoid membrane. The catalysed reaction is a plastoquinone + NADH + (n+1) H(+)(in) = a plastoquinol + NAD(+) + n H(+)(out). It carries out the reaction a plastoquinone + NADPH + (n+1) H(+)(in) = a plastoquinol + NADP(+) + n H(+)(out). Its function is as follows. NDH shuttles electrons from NAD(P)H:plastoquinone, via FMN and iron-sulfur (Fe-S) centers, to quinones in the photosynthetic chain and possibly in a chloroplast respiratory chain. The immediate electron acceptor for the enzyme in this species is believed to be plastoquinone. Couples the redox reaction to proton translocation, and thus conserves the redox energy in a proton gradient. The sequence is that of NAD(P)H-quinone oxidoreductase subunit I, chloroplastic from Gossypium barbadense (Sea Island cotton).